The primary structure comprises 174 residues: Crossover junction endodeoxyribonuclease RuvC (174 aa).

Active-site residues include aspartate 8, glutamate 67, and aspartate 139. Aspartate 8, glutamate 67, and aspartate 139 together coordinate Mg(2+).

The protein belongs to the RuvC family. In terms of assembly, homodimer which binds Holliday junction (HJ) DNA. The HJ becomes 2-fold symmetrical on binding to RuvC with unstacked arms; it has a different conformation from HJ DNA in complex with RuvA. In the full resolvosome a probable DNA-RuvA(4)-RuvB(12)-RuvC(2) complex forms which resolves the HJ. Requires Mg(2+) as cofactor.

It localises to the cytoplasm. The enzyme catalyses Endonucleolytic cleavage at a junction such as a reciprocal single-stranded crossover between two homologous DNA duplexes (Holliday junction).. In terms of biological role, the RuvA-RuvB-RuvC complex processes Holliday junction (HJ) DNA during genetic recombination and DNA repair. Endonuclease that resolves HJ intermediates. Cleaves cruciform DNA by making single-stranded nicks across the HJ at symmetrical positions within the homologous arms, yielding a 5'-phosphate and a 3'-hydroxyl group; requires a central core of homology in the junction. The consensus cleavage sequence is 5'-(A/T)TT(C/G)-3'. Cleavage occurs on the 3'-side of the TT dinucleotide at the point of strand exchange. HJ branch migration catalyzed by RuvA-RuvB allows RuvC to scan DNA until it finds its consensus sequence, where it cleaves and resolves the cruciform DNA. In Pseudomonas putida (strain ATCC 47054 / DSM 6125 / CFBP 8728 / NCIMB 11950 / KT2440), this protein is Crossover junction endodeoxyribonuclease RuvC.